The following is a 293-amino-acid chain: Ribonuclease HIII (293 aa).

The region spanning 78-293 is the RNase H type-2 domain; the sequence is LPLIGTDEVG…TEKAKKRLER (216 aa). Residues aspartate 84, glutamate 85, and aspartate 187 each contribute to the a divalent metal cation site.

It belongs to the RNase HII family. RnhC subfamily. Mn(2+) is required as a cofactor. It depends on Mg(2+) as a cofactor.

It localises to the cytoplasm. It catalyses the reaction Endonucleolytic cleavage to 5'-phosphomonoester.. Endonuclease that specifically degrades the RNA of RNA-DNA hybrids. The chain is Ribonuclease HIII from Streptococcus pneumoniae serotype 19F (strain G54).